Reading from the N-terminus, the 300-residue chain is Epimerase family protein MW0731 (300 aa).

This sequence belongs to the NAD(P)-dependent epimerase/dehydratase family. SDR39U1 subfamily.

The protein is Epimerase family protein MW0731 of Staphylococcus aureus (strain MW2).